We begin with the raw amino-acid sequence, 64 residues long: Large ribosomal subunit protein bL35 (64 aa).

The disordered stretch occupies residues 1 to 41 (MPKMKSHSGASKRFKVSGKGKLLRQQANRRHLLEHKPSRRT).

It belongs to the bacterial ribosomal protein bL35 family.

This is Large ribosomal subunit protein bL35 from Nocardia farcinica (strain IFM 10152).